Reading from the N-terminus, the 123-residue chain is Large ribosomal subunit protein uL14 (123 aa).

Belongs to the universal ribosomal protein uL14 family. As to quaternary structure, part of the 50S ribosomal subunit. Forms a cluster with proteins L3 and L19. In the 70S ribosome, L14 and L19 interact and together make contacts with the 16S rRNA in bridges B5 and B8.

Binds to 23S rRNA. Forms part of two intersubunit bridges in the 70S ribosome. This is Large ribosomal subunit protein uL14 from Enterobacter sp. (strain 638).